Reading from the N-terminus, the 906-residue chain is Protein translocase subunit SecA (906 aa).

ATP-binding positions include Q86, G104–T108, and D511. Composition is skewed to basic and acidic residues over residues H853–E865 and V877–D888. Residues H853 to E906 form a disordered region. Zn(2+) is bound by residues C890, C892, C901, and H902. Basic residues predominate over residues K896–E906.

Belongs to the SecA family. Monomer and homodimer. Part of the essential Sec protein translocation apparatus which comprises SecA, SecYEG and auxiliary proteins SecDF-YajC and YidC. Zn(2+) serves as cofactor.

The protein resides in the cell inner membrane. It localises to the cytoplasm. It carries out the reaction ATP + H2O + cellular proteinSide 1 = ADP + phosphate + cellular proteinSide 2.. Part of the Sec protein translocase complex. Interacts with the SecYEG preprotein conducting channel. Has a central role in coupling the hydrolysis of ATP to the transfer of proteins into and across the cell membrane, serving both as a receptor for the preprotein-SecB complex and as an ATP-driven molecular motor driving the stepwise translocation of polypeptide chains across the membrane. The protein is Protein translocase subunit SecA of Francisella tularensis subsp. novicida (strain U112).